The primary structure comprises 503 residues: Maturase K (503 aa).

The protein belongs to the intron maturase 2 family. MatK subfamily.

The protein localises to the plastid. The protein resides in the chloroplast. Usually encoded in the trnK tRNA gene intron. Probably assists in splicing its own and other chloroplast group II introns. The protein is Maturase K of Kunzea pulchella (Red kunzea).